The chain runs to 251 residues: Mlc titration factor A (251 aa).

Residues His-111, His-148, His-152, and Glu-211 each coordinate Zn(2+).

Belongs to the MtfA family. As to quaternary structure, interacts with Mlc. The cofactor is Zn(2+).

It localises to the cytoplasm. Functionally, involved in the modulation of the activity of the glucose-phosphotransferase system (glucose-PTS). Interacts with the transcriptional repressor Mlc, preventing its interaction with DNA and leading to the modulation of expression of genes regulated by Mlc, including ptsG, which encodes the PTS system glucose-specific EIICB component. Shows zinc-dependent metallopeptidase activity. The polypeptide is Mlc titration factor A (Salmonella arizonae (strain ATCC BAA-731 / CDC346-86 / RSK2980)).